The primary structure comprises 439 residues: Secreted aspartic protease LUC8 (439 aa).

The first 20 residues, 1–20, serve as a signal peptide directing secretion; that stretch reads MMHAFHHLAVLLIGSLPASA. Residues Asn33 and Asn54 are each glycosylated (N-linked (GlcNAc...) asparagine). A Peptidase A1 domain is found at 51-435; it reads YLFNITVGTP…DFETQSFGLA (385 aa). The active site involves Asp69. Residues Asn110, Asn126, Asn179, and Asn289 are each glycosylated (N-linked (GlcNAc...) asparagine). Residue Asp300 is part of the active site. Asn329 and Asn373 each carry an N-linked (GlcNAc...) asparagine glycan. Cys355 and Cys391 are joined by a disulfide.

This sequence belongs to the peptidase A1 family.

It localises to the secreted. Functionally, secreted aspartic protease; part of the gene cluster that mediates the biosynthesis of the mycotoxin lucilactaene and the lucilactaene-related compound NG-391 that act as cell cycle inhibitors with potent growth inhibitory activity against malarial parasites, moderate growth inhibitory activity against cancer cells, and no activity against bacteria and fungi. Within the cluster, LUC7 and LUC8 encode proteins which are not commonly involved in the biosynthesis of secondary metabolites and are not essential for lucilactaene biosynthesis. The sequence is that of Secreted aspartic protease LUC8 from Fusarium sp.